The sequence spans 280 residues: Ribosomal RNA small subunit methyltransferase A (280 aa).

Residues asparagine 28, leucine 30, glycine 55, glutamate 77, aspartate 103, and asparagine 122 each coordinate S-adenosyl-L-methionine.

This sequence belongs to the class I-like SAM-binding methyltransferase superfamily. rRNA adenine N(6)-methyltransferase family. RsmA subfamily.

The protein resides in the cytoplasm. The enzyme catalyses adenosine(1518)/adenosine(1519) in 16S rRNA + 4 S-adenosyl-L-methionine = N(6)-dimethyladenosine(1518)/N(6)-dimethyladenosine(1519) in 16S rRNA + 4 S-adenosyl-L-homocysteine + 4 H(+). In terms of biological role, specifically dimethylates two adjacent adenosines (A1518 and A1519) in the loop of a conserved hairpin near the 3'-end of 16S rRNA in the 30S particle. May play a critical role in biogenesis of 30S subunits. The chain is Ribosomal RNA small subunit methyltransferase A from Roseobacter denitrificans (strain ATCC 33942 / OCh 114) (Erythrobacter sp. (strain OCh 114)).